The chain runs to 218 residues: Pyridoxine/pyridoxamine 5'-phosphate oxidase (218 aa).

Residues 14–17 (RREY) and lysine 72 each bind substrate. Residues 67–72 (RIVLLK), 82–83 (YT), arginine 88, lysine 89, and glutamine 111 contribute to the FMN site. Residues tyrosine 129, arginine 133, and serine 137 each coordinate substrate. Residues 146–147 (QS) and tryptophan 191 each bind FMN. 197 to 199 (RLH) is a substrate binding site. Residue arginine 201 coordinates FMN.

This sequence belongs to the pyridoxamine 5'-phosphate oxidase family. As to quaternary structure, homodimer. FMN serves as cofactor.

The enzyme catalyses pyridoxamine 5'-phosphate + O2 + H2O = pyridoxal 5'-phosphate + H2O2 + NH4(+). It catalyses the reaction pyridoxine 5'-phosphate + O2 = pyridoxal 5'-phosphate + H2O2. The protein operates within cofactor metabolism; pyridoxal 5'-phosphate salvage; pyridoxal 5'-phosphate from pyridoxamine 5'-phosphate: step 1/1. It functions in the pathway cofactor metabolism; pyridoxal 5'-phosphate salvage; pyridoxal 5'-phosphate from pyridoxine 5'-phosphate: step 1/1. Functionally, catalyzes the oxidation of either pyridoxine 5'-phosphate (PNP) or pyridoxamine 5'-phosphate (PMP) into pyridoxal 5'-phosphate (PLP). This is Pyridoxine/pyridoxamine 5'-phosphate oxidase from Enterobacter sp. (strain 638).